The following is a 487-amino-acid chain: Gasdermin-D (487 aa).

Tyrosine 38 is subject to Phosphotyrosine. An S-(2-succinyl)cysteine mark is found at cysteine 39, cysteine 57, and cysteine 77. A run of 2 beta stranded transmembrane segments spans residues 92 to 98 (QGRVMLS) and 104 to 109 (KISGGA). An S-(2-succinyl)cysteine modification is found at cysteine 122. The next 2 beta stranded transmembrane spans lie at 181–187 (GSGQFTL) and 192–198 (CLKGEGK). S-(2-succinyl)cysteine occurs at positions 192 and 265. Residue cysteine 192 is the site of S-palmitoyl cysteine attachment. Residues 278-298 (IDEEELIEAADFQGLYAEVKA) are linker helix loop. 3 positions are modified to S-(2-succinyl)cysteine: cysteine 299, cysteine 434, and cysteine 487.

This sequence belongs to the gasdermin family. Homooligomer; homooligomeric ring-shaped pore complex containing 27-28 subunits when inserted in the membrane. Homooligomerization is promoted by the mTORC1 complex in macrophages. In response to a canonical inflammasome stimulus, such as nigericin, recruited to NLRP3 inflammasone with similar kinetics to that of uncleaved CASP1 precursor. Although this recruitment is also observed in the absence of PYCARD, it is more efficient in its presence. Post-translationally, cleavage at Asp-276 by CASP1 (mature and uncleaved precursor forms), CASP4/CASP11 or CASP8 relieves autoinhibition and is sufficient to initiate pyroptosis. Cleavage by CASP1 and CASP4/CASP11 is not strictly dependent on the consensus cleavage site on GSDMD but depends on an exosite interface on CASP1 that recognizes and binds the Gasdermin-D, C-terminal (GSDMD-CT) part. Cleavage by CASP8 takes place following inactivation of MAP3K7/TAK1 by Yersinia toxin YopJ. Cleavage at Asp-88 by CASP3 or CASP7 inactivates the ability to mediate pyroptosis, but generates the Gasdermin-D, p13 chain, which translocates to the nucleus and acts as a transcription regulator. Cleavage by papain allergen generates the Gasdermin-D, p40 chain. In terms of processing, palmitoylated at Cys-192 by ZDHHC5 and ZDHHC9 in response to microbial infection and danger signals. May also be palmitoylated by ZDHHC7. Palmitoylation takes place before cleavage by caspases (CASP1, CASP4, CASP5 or CASP8) and is required for membrane translocation and pore formation. Depalmitoylated by LYPLA2. Succination of Cys-192 by the Krebs cycle intermediate fumarate, which leads to S-(2-succinyl)cysteine residues, inhibits processing by caspases, and ability to initiate pyroptosis. Succination modification is catalyzed by a non-enzymatic reaction caused by an accumulation of fumarate. Post-translationally, glycosylated: O-GlcNAcylation by OGT leads to reduced cleavage by CASP4 and decreased LPS-induced endothelial cell pyroptosis. In terms of tissue distribution, highly expressed in brain endothelial cells.

The protein resides in the cytoplasm. It localises to the cytosol. It is found in the inflammasome. The protein localises to the cell membrane. Its subcellular location is the secreted. The protein resides in the mitochondrion membrane. It localises to the nucleus. With respect to regulation, the full-length protein before cleavage is inactive: intramolecular interactions between N- and C-terminal domains mediate autoinhibition in the absence of activation signal. The intrinsic pyroptosis-inducing activity is carried by the released N-terminal moiety (Gasdermin-D, N-terminal) following cleavage by inflammatory caspases CASP1, CASP4/CASP11 or CASP8. Cleavage at Asp-88 by CASP3 or CASP7 inactivates the ability to mediate pyroptosis. Pore formation is specifically inhibited by VHH(GSDMD-1) nanobody, protecting against excessive pyroptosis. Inhibited by small molecule NU6300, which covalently reacts with Cys-191, thereby preventing palmitoylation and pyroptosis. Its function is as follows. Precursor of a pore-forming protein that plays a key role in host defense against pathogen infection and danger signals. This form constitutes the precursor of the pore-forming protein: upon cleavage, the released N-terminal moiety (Gasdermin-D, N-terminal) binds to membranes and forms pores, triggering pyroptosis. Functionally, promotes pyroptosis in response to microbial infection and danger signals. Produced by the cleavage of gasdermin-D by inflammatory caspases CASP1 or CASP4/CASP11 in response to canonical, as well as non-canonical (such as cytosolic LPS) inflammasome activators. After cleavage, moves to the plasma membrane where it strongly binds to inner leaflet lipids, including monophosphorylated phosphatidylinositols, such as phosphatidylinositol 4-phosphate, bisphosphorylated phosphatidylinositols, such as phosphatidylinositol (4,5)-bisphosphate, as well as phosphatidylinositol (3,4,5)-bisphosphate, and more weakly to phosphatidic acid and phosphatidylserine. Homooligomerizes within the membrane and forms pores of 10-15 nanometers (nm) of inner diameter, allowing the release of mature interleukin-1 (IL1B and IL18) and triggering pyroptosis. Gasdermin pores also allow the release of mature caspase-7 (CASP7). In some, but not all, cells types, pyroptosis is followed by pyroptotic cell death, which is caused by downstream activation of ninjurin-1 (NINJ1), which mediates membrane rupture (cytolysis). Also forms pores in the mitochondrial membrane, resulting in release of mitochondrial DNA (mtDNA) into the cytosol. Gasdermin-D, N-terminal released from pyroptotic cells into the extracellular milieu rapidly binds to and kills both Gram-negative and Gram-positive bacteria, without harming neighboring mammalian cells, as it does not disrupt the plasma membrane from the outside due to lipid-binding specificity. Under cell culture conditions, also active against intracellular bacteria, such as Listeria monocytogenes. Also active in response to MAP3K7/TAK1 inactivation by Yersinia toxin YopJ, which triggers cleavage by CASP8 and subsequent activation. Required for mucosal tissue defense against enteric pathogens. Activation of the non-canonical inflammasome in brain endothelial cells can lead to excessive pyroptosis, leading to blood-brain barrier breakdown. Strongly binds to bacterial and mitochondrial lipids, including cardiolipin. Does not bind to unphosphorylated phosphatidylinositol, phosphatidylethanolamine nor phosphatidylcholine. In terms of biological role, transcription coactivator produced by the cleavage by CASP3 or CASP7 in the upper small intestine in response to dietary antigens. Required to maintain food tolerance in small intestine: translocates to the nucleus and acts as a coactivator for STAT1 to induce the transcription of CIITA and MHC class II molecules, which in turn induce type 1 regulatory T (Tr1) cells in upper small intestine. Produced by the cleavage by papain allergen. After cleavage, moves to the plasma membrane and homooligomerizes within the membrane and forms pores of 10-15 nanometers (nm) of inner diameter, allowing the specific release of mature interleukin-33 (IL33), promoting type 2 inflammatory immune response. This is Gasdermin-D from Mus musculus (Mouse).